Consider the following 703-residue polypeptide: Arylphorin subunit beta (703 aa).

A signal peptide spans 1–16; that stretch reads MKTVIILAGLVALALG. N-linked (GlcNAc...) asparagine glycosylation is found at Asn72 and Asn211.

This sequence belongs to the hemocyanin family. Arylphorin is a hexamer of subunits alpha and beta. In terms of tissue distribution, fat body.

The protein resides in the secreted. It is found in the extracellular space. Functionally, arylphorin is a larval storage protein (LSP) which may serve as a storage protein used primarily as a source of aromatic amino acids for protein synthesis during metamorphosis. It is a constituent of the sclerotizing system of the cuticle, and serves as a carrier for ecdysteroid hormone. The protein is Arylphorin subunit beta of Manduca sexta (Tobacco hawkmoth).